A 284-amino-acid chain; its full sequence is L-ribulose-5-phosphate 3-epimerase UlaE (284 aa).

The protein belongs to the L-ribulose-5-phosphate 3-epimerase family.

It carries out the reaction L-ribulose 5-phosphate = L-xylulose 5-phosphate. The protein operates within cofactor degradation; L-ascorbate degradation; D-xylulose 5-phosphate from L-ascorbate: step 3/4. Functionally, catalyzes the isomerization of L-xylulose-5-phosphate to L-ribulose-5-phosphate. Is involved in the anaerobic L-ascorbate utilization. The protein is L-ribulose-5-phosphate 3-epimerase UlaE of Salmonella heidelberg (strain SL476).